The following is a 1071-amino-acid chain: DNA-directed RNA polymerase subunit beta (1071 aa).

It belongs to the RNA polymerase beta chain family. In terms of assembly, in plastids the minimal PEP RNA polymerase catalytic core is composed of four subunits: alpha, beta, beta', and beta''. When a (nuclear-encoded) sigma factor is associated with the core the holoenzyme is formed, which can initiate transcription.

It is found in the plastid. The protein resides in the chloroplast. The catalysed reaction is RNA(n) + a ribonucleoside 5'-triphosphate = RNA(n+1) + diphosphate. Functionally, DNA-dependent RNA polymerase catalyzes the transcription of DNA into RNA using the four ribonucleoside triphosphates as substrates. In Acorus calamus (Sweet flag), this protein is DNA-directed RNA polymerase subunit beta.